A 587-amino-acid polypeptide reads, in one-letter code: ATP-dependent lipid A-core flippase (587 aa).

The next 5 membrane-spanning stretches (helical) occupy residues 31 to 51 (LIAS…LIYL), 68 to 88 (LKIM…TNFI), 145 to 165 (GSLI…AVMF), 169 to 189 (WELT…ITIV), and 259 to 279 (VQII…TPLI). The ABC transmembrane type-1 domain maps to 32–315 (IASGIALVFN…LTNVNSQFQR (284 aa)). Residues 347–583 (LEFKNVSFAY…NGAYKQLYSM (237 aa)) enclose the ABC transporter domain. ATP is bound at residue 381–388 (GRSGSGKS).

Belongs to the ABC transporter superfamily. Lipid exporter (TC 3.A.1.106) family. In terms of assembly, homodimer.

It localises to the cell inner membrane. The enzyme catalyses ATP + H2O + lipid A-core oligosaccharideSide 1 = ADP + phosphate + lipid A-core oligosaccharideSide 2.. In terms of biological role, involved in lipopolysaccharide (LPS) biosynthesis. Translocates lipid A-core from the inner to the outer leaflet of the inner membrane. Transmembrane domains (TMD) form a pore in the inner membrane and the ATP-binding domain (NBD) is responsible for energy generation. This is ATP-dependent lipid A-core flippase from Haemophilus influenzae (strain 86-028NP).